We begin with the raw amino-acid sequence, 190 residues long: Peptide methionine sulfoxide reductase MsrA (190 aa).

The active site involves Cys-21.

It belongs to the MsrA Met sulfoxide reductase family.

The enzyme catalyses L-methionyl-[protein] + [thioredoxin]-disulfide + H2O = L-methionyl-(S)-S-oxide-[protein] + [thioredoxin]-dithiol. It carries out the reaction [thioredoxin]-disulfide + L-methionine + H2O = L-methionine (S)-S-oxide + [thioredoxin]-dithiol. Its function is as follows. Has an important function as a repair enzyme for proteins that have been inactivated by oxidation. Catalyzes the reversible oxidation-reduction of methionine sulfoxide in proteins to methionine. The chain is Peptide methionine sulfoxide reductase MsrA from Polynucleobacter asymbioticus (strain DSM 18221 / CIP 109841 / QLW-P1DMWA-1) (Polynucleobacter necessarius subsp. asymbioticus).